A 214-amino-acid chain; its full sequence is MRIILLGAPGAGKGTQAQFIMEQYGIPQISTGDMLRAAVKAGTPLGLEAKKVMDAGQLVSDDLIIGLVKERIAQDDCVKGFLLDGFPRTIPQADAMAANGISIDHVIEIDVPDEEIVKRMSGRRVHPGSGRVYHVVFNPPKVEGKDDVTGEDLAIRPDDEEATVRKRLGIYHEQTKPLVEYYGKVAAAGNTQYHKFDGTQSVAAVSAQLASVLK.

Gly10–Thr15 provides a ligand contact to ATP. The tract at residues Ser30 to Val59 is NMP. AMP contacts are provided by residues Thr31, Arg36, Gln57–Val59, Gly85–Arg88, and Gln92. Residues Gly122–Asp159 are LID. Residues Arg123 and Val132–Tyr133 each bind ATP. Residues Arg156 and Arg167 each contribute to the AMP site. Gln200 provides a ligand contact to ATP.

This sequence belongs to the adenylate kinase family. Monomer.

Its subcellular location is the cytoplasm. It carries out the reaction AMP + ATP = 2 ADP. Its pathway is purine metabolism; AMP biosynthesis via salvage pathway; AMP from ADP: step 1/1. Catalyzes the reversible transfer of the terminal phosphate group between ATP and AMP. Plays an important role in cellular energy homeostasis and in adenine nucleotide metabolism. The sequence is that of Adenylate kinase from Shewanella sp. (strain ANA-3).